An 888-amino-acid chain; its full sequence is Leucine--tRNA ligase (888 aa).

The 'HIGH' region motif lies at 43–53; it reads PYPSGRIHMGH. The 'KMSKS' region signature appears at 644–648; the sequence is KMSKS. Lys-647 contributes to the ATP binding site.

It belongs to the class-I aminoacyl-tRNA synthetase family.

Its subcellular location is the cytoplasm. The enzyme catalyses tRNA(Leu) + L-leucine + ATP = L-leucyl-tRNA(Leu) + AMP + diphosphate. This is Leucine--tRNA ligase from Rhodopseudomonas palustris (strain BisA53).